Consider the following 345-residue polypeptide: MKVGIVGATGYGGLELIRLLSQHPNVEEIICYSSSQEGLPLDDMYPHLSGNVRWTLKAIDPEAIRADVDTVFLATPPGVSGELTPDLVKLGLKVIDLSGDLRINEPDVYEAWYKRQAAPVGTIRGAVYGLTEWQRDEIAAAQIIANPGCYPTAVLLGLAPLVQQKWIDPKRIIIDAKSGTSGAGRNPSQITHFSEMNENFKIYQVNQHKHTPEIEQQLRNWDESVGNVTFSTHLVPMVRGIMATIYAEANQAISEKELREHFAYVYETSPFVHVYSEGRYPATKEVFGSNRCHIGVTYDERTNRITVVSVIDNLVKGAAGQAIQNYNVMNGYEETLGLEGSPLYP.

Cysteine 149 is an active-site residue.

It belongs to the NAGSA dehydrogenase family. Type 1 subfamily.

The protein localises to the cytoplasm. It carries out the reaction N-acetyl-L-glutamate 5-semialdehyde + phosphate + NADP(+) = N-acetyl-L-glutamyl 5-phosphate + NADPH + H(+). It participates in amino-acid biosynthesis; L-arginine biosynthesis; N(2)-acetyl-L-ornithine from L-glutamate: step 3/4. In terms of biological role, catalyzes the NADPH-dependent reduction of N-acetyl-5-glutamyl phosphate to yield N-acetyl-L-glutamate 5-semialdehyde. This is N-acetyl-gamma-glutamyl-phosphate reductase from Halalkalibacterium halodurans (strain ATCC BAA-125 / DSM 18197 / FERM 7344 / JCM 9153 / C-125) (Bacillus halodurans).